A 446-amino-acid polypeptide reads, in one-letter code: tRNA modification GTPase MnmE (446 aa).

(6S)-5-formyl-5,6,7,8-tetrahydrofolate-binding residues include Arg-23, Glu-81, and Lys-120. Residues 216 to 370 (GFKVAIIGKP…LIKELELILD (155 aa)) form the TrmE-type G domain. Asn-226 lines the K(+) pocket. Residues 226 to 231 (NVGKSS), 245 to 251 (SDIAGTT), and 270 to 273 (DTAG) contribute to the GTP site. Ser-230 serves as a coordination point for Mg(2+). K(+)-binding residues include Ser-245, Ile-247, and Thr-250. Mg(2+) is bound at residue Thr-251. Lys-446 is a (6S)-5-formyl-5,6,7,8-tetrahydrofolate binding site.

This sequence belongs to the TRAFAC class TrmE-Era-EngA-EngB-Septin-like GTPase superfamily. TrmE GTPase family. As to quaternary structure, homodimer. Heterotetramer of two MnmE and two MnmG subunits. It depends on K(+) as a cofactor.

The protein resides in the cytoplasm. Exhibits a very high intrinsic GTPase hydrolysis rate. Involved in the addition of a carboxymethylaminomethyl (cmnm) group at the wobble position (U34) of certain tRNAs, forming tRNA-cmnm(5)s(2)U34. This is tRNA modification GTPase MnmE from Aliarcobacter butzleri (strain RM4018) (Arcobacter butzleri).